Consider the following 1047-residue polypeptide: [F-actin]-monooxygenase MICAL1 (1047 aa).

Residues 1–489 form a monooxygenase domain region; sequence MASPTSTNPA…QDLYDIMDKE (489 aa). Residues Cys-95, 114–116, 121–123, Phe-181, Tyr-293, and Asp-393 each bind FAD; these read EKR and RHN. At Thr-475 the chain carries Phosphothreonine. A Calponin-homology (CH) domain is found at 507–611; the sequence is SAGTEELLHW…YLSHFHSAFK (105 aa). The residue at position 616 (Ser-616) is a Phosphoserine. The disordered stretch occupies residues 644–672; that stretch reads RTKVEEETPCTEEPPVSEPSVPPALPSEH. The segment covering 659–668 has biased composition (pro residues); the sequence is VSEPSVPPAL. Residues 679-741 form the LIM zinc-binding domain; sequence DVCELCGKRL…LQHLPQEDQK (63 aa). Zn(2+) contacts are provided by Cys-681, Cys-684, His-702, Cys-705, Cys-708, Cys-711, Cys-731, and His-734. Disordered regions lie at residues 739-787 and 849-872; these read DQKE…QPAR and EKGE…PPPL. Polar residues predominate over residues 745 to 767; it reads NNGSPENQELPTPGDSTTQSGPS. A phosphoserine mark is found at Ser-777 and Ser-781. The span at 851 to 868 shows a compositional bias: acidic residues; it reads GEEEEEEEEEEEEEEEEL. Positions 905-1047 constitute a bMERB domain; the sequence is KEEEMKRFCK…EERRLREMPV (143 aa). Residues 912–996 are a coiled coil; the sequence is FCKAQAIQRR…LEEKQRQLDH (85 aa).

The protein belongs to the Mical family. Interacts with STK38 and STK38L. Associates with the SH3 domain of NEDD9. Interacts with VIM and PLXNA3. Interacts with RAB1B, RAB8A, RAB10, RAB13 and RAB15 (in their GTP-bound forms); binding to RAB1B is of low affinity compared to other Rab proteins; at least in case of RAB8A and RAB10 can bind 2 molecules of the Rab proteins simultaneously. Interacts with GRAF1/ARHGAP26, GRAF2/ARHGAP10, RAB8A, RAB8B and RAB10; may bind simultaneously to GRAFs and Rabs and connects GRAFs to Rabs. Does not interact with RAB1 and RAB11A. Requires FAD as cofactor.

It is found in the cytoplasm. It localises to the cytoskeleton. The protein localises to the endosome membrane. The protein resides in the midbody. It catalyses the reaction L-methionyl-[F-actin] + NADPH + O2 + H(+) = L-methionyl-(R)-S-oxide-[F-actin] + NADP(+) + H2O. It carries out the reaction NADPH + O2 + H(+) = H2O2 + NADP(+). Functionally, monooxygenase that promotes depolymerization of F-actin by mediating oxidation of specific methionine residues on actin to form methionine-sulfoxide, resulting in actin filament disassembly and preventing repolymerization. In the absence of actin, it also functions as a NADPH oxidase producing H(2)O(2). Acts as a cytoskeletal regulator that connects NEDD9 to intermediate filaments. Also acts as a negative regulator of apoptosis via its interaction with STK38 and STK38L; acts by antagonizing STK38 and STK38L activation by MST1/STK4. Involved in regulation of lamina-specific connectivity in the nervous system such as the development of lamina-restricted hippocampal connections. Through redox regulation of the actin cytoskeleton controls the intracellular distribution of secretory vesicles containing L1/neurofascin/NgCAM family proteins in neurons, thereby regulating their cell surface levels. May act as Rab effector protein and play a role in vesicle trafficking. Promotes endosomal tubule extension by associating with RAB8 (RAB8A or RAB8B), RAB10 and GRAF (GRAF1/ARHGAP26 or GRAF2/ARHGAP10) on the endosomal membrane which may connect GRAFs to Rabs, thereby participating in neosynthesized Rab8-Rab10-Rab11-dependent protein export. The chain is [F-actin]-monooxygenase MICAL1 (Mical1) from Rattus norvegicus (Rat).